The sequence spans 315 residues: Replication factor C small subunit (315 aa).

Residue 43-50 (GSPGVGKT) coordinates ATP.

It belongs to the activator 1 small subunits family. RfcS subfamily. As to quaternary structure, heteromultimer composed of small subunits (RfcS) and large subunits (RfcL).

Its function is as follows. Part of the RFC clamp loader complex which loads the PCNA sliding clamp onto DNA. This chain is Replication factor C small subunit, found in Methanococcus maripaludis (strain C7 / ATCC BAA-1331).